A 483-amino-acid polypeptide reads, in one-letter code: MGRTLYDKIWDEHVVHTEEDGTSILYIDRHLVHEVTSPQAFEGLREAGRKVWRISSIVATADHNTPTTGWELGYDGITDLVSKEQITTLDANIKEFGAAAFFPFMSKRQGIVHVIGPENGATLPGMTVVCGDSHTSTHGAFGALAHGIGTSEVEHVMATQTLLAKKAKNMLIKVEGAVTKGVTAKDIVLAIIGKIGTAGGTGYTIEFAGSAIRALSMEGRMTVCNMAIEGGARAGLVAVDAKTIEYLKGRLLAPGTDSVTGKFVGGPEWDMAARYWATLHSDADATFDAVVELDASQILPQVSWGTSPEMVLSIEDRVPDPEKEKDANKRGAIERALTYMGLEPGKALNDLYIDKVFIGSCTNSRIEDMREAAAVVKHIGQKVAKNVKLAMVVPGSGLVKEQAEREGLDKIFIAAGFEWREPGCSMCLAMNADRLEPGERCASTSNRNFEGRQGAGGRTHLVSPAMAAAAAVHGHFVDIRKFV.

The [4Fe-4S] cluster site is built by Cys-361, Cys-424, and Cys-427.

It belongs to the aconitase/IPM isomerase family. LeuC type 1 subfamily. Heterodimer of LeuC and LeuD. [4Fe-4S] cluster is required as a cofactor.

The enzyme catalyses (2R,3S)-3-isopropylmalate = (2S)-2-isopropylmalate. It participates in amino-acid biosynthesis; L-leucine biosynthesis; L-leucine from 3-methyl-2-oxobutanoate: step 2/4. Catalyzes the isomerization between 2-isopropylmalate and 3-isopropylmalate, via the formation of 2-isopropylmaleate. The sequence is that of 3-isopropylmalate dehydratase large subunit from Polaromonas naphthalenivorans (strain CJ2).